Consider the following 504-residue polypeptide: ATP synthase subunit alpha 1 (504 aa).

ATP is bound at residue 170 to 177 (GDRQIGKT).

This sequence belongs to the ATPase alpha/beta chains family. F-type ATPases have 2 components, CF(1) - the catalytic core - and CF(0) - the membrane proton channel. CF(1) has five subunits: alpha(3), beta(3), gamma(1), delta(1), epsilon(1). CF(0) has three main subunits: a(1), b(2) and c(9-12). The alpha and beta chains form an alternating ring which encloses part of the gamma chain. CF(1) is attached to CF(0) by a central stalk formed by the gamma and epsilon chains, while a peripheral stalk is formed by the delta and b chains.

The protein localises to the cell inner membrane. It carries out the reaction ATP + H2O + 4 H(+)(in) = ADP + phosphate + 5 H(+)(out). Functionally, produces ATP from ADP in the presence of a proton gradient across the membrane. The alpha chain is a regulatory subunit. The polypeptide is ATP synthase subunit alpha 1 (Syntrophus aciditrophicus (strain SB)).